The chain runs to 155 residues: Transcriptional repressor NrdR (155 aa).

A disordered region spans residues methionine 1–glycine 22. A zinc finger spans residues cysteine 3 to cysteine 34. The span at glycine 7–glycine 22 shows a compositional bias: basic and acidic residues. The 91-residue stretch at isoleucine 49–aspartate 139 folds into the ATP-cone domain.

This sequence belongs to the NrdR family. The cofactor is Zn(2+).

In terms of biological role, negatively regulates transcription of bacterial ribonucleotide reductase nrd genes and operons by binding to NrdR-boxes. The sequence is that of Transcriptional repressor NrdR from Phenylobacterium zucineum (strain HLK1).